Consider the following 396-residue polypeptide: tRNA (guanine-N(7)-)-methyltransferase non-catalytic subunit wuho (396 aa).

WD repeat units follow at residues 75 to 115 (KVEV…AQLL), 162 to 201 (GHLS…DIHS), 205 to 243 (GHKE…ELLL), and 302 to 342 (AGTW…RASG).

Belongs to the WD repeat TRM82 family. As to quaternary structure, forms a heterodimer with the catalytic subunit Mettl1. Interacts with mei-P26 and weakly interacts with bgcn; required for the function or formation of the mei-P26-bgcn-bam-sxl complex. Interacts with nanos; may be involved in mei-P26-dependent derepression of the BMP signaling pathway. Interacts with Myc; the interaction may be mediated by mei-P26 and may be involved in the regulation of ribosome biogenesis. In testis, it is present at high level in hub cells, a niche for germline stem cells of testis. Ubiquitously expressed in all testicular cells throughout spermatogenesis. Ubiquitously expressed in all germline and somatic cells of the ovary.

It is found in the nucleus. Its subcellular location is the cytoplasm. It participates in tRNA modification; N(7)-methylguanine-tRNA biosynthesis. Functionally, required for the Mettl1-dependent formation of N(7)-methylguanine at position 46 (m7G46) in tRNA. In the Mettl1-wuho methyltransferase complex, it is required to stabilize and induce conformational changes of the catalytic subunit. Required for binding of nanos mRNA and repression of translation by the mei-P26-bgcn-bam-sxl complex. May cooperate with mei-P26 and nanos to derepress the BMP signaling pathway. May cooperate with mei-P26 to suppress expression of a subset of microRNAs. May cooperate with mei-P26 to regulate bam expression levels in germline cells during gametogenesis. Required to promote mitosis to meiosis transition during gametogenesis. May regulate germline cell division in part by regulating ribosome biogenesis. The chain is tRNA (guanine-N(7)-)-methyltransferase non-catalytic subunit wuho from Drosophila pseudoobscura pseudoobscura (Fruit fly).